Here is a 373-residue protein sequence, read N- to C-terminus: XK-related protein 9 (373 aa).

The next 8 helical transmembrane spans lie at 8-28, 38-58, 166-186, 203-223, 224-244, 256-276, 295-315, and 318-338; these read FMMS…DIWV, YVFS…AQCF, AAIM…QVAL, ITYL…VVLL, LFLN…LGII, CISM…FTFF, VLGT…IFNP, and FIPI…FLIV.

It belongs to the XK family. In terms of processing, undergoes proteolytic processing by caspase-3 (CASP3), caspase-6 (CASP6) and caspase-7 (CASP7) to generate the XK-related protein 9, processed form, leading to its activation.

It is found in the cell membrane. It catalyses the reaction a 1,2-diacyl-sn-glycero-3-phospho-L-serine(in) = a 1,2-diacyl-sn-glycero-3-phospho-L-serine(out). Activated upon caspase cleavage to generate the XK-related protein 9, processed form. Does not act prior the onset of apoptosis. In terms of biological role, phospholipid scramblase that promotes phosphatidylserine exposure on apoptotic cell surface. Phosphatidylserine is a specific marker only present at the surface of apoptotic cells and acts as a specific signal for engulfment. In Pan troglodytes (Chimpanzee), this protein is XK-related protein 9.